Here is a 189-residue protein sequence, read N- to C-terminus: UPF0301 protein RT0098 (189 aa).

Belongs to the UPF0301 (AlgH) family.

This chain is UPF0301 protein RT0098, found in Rickettsia typhi (strain ATCC VR-144 / Wilmington).